A 299-amino-acid polypeptide reads, in one-letter code: 5,10-dihydrophenazine-1-carboxylate 9-dimethylallyltransferase (299 aa).

The protein belongs to the aromatic prenyltransferase family.

It catalyses the reaction 5,10-dihydrophenazine 1-carboxylate + dimethylallyl diphosphate = 5,10-dihydro-9-dimethylallylphenazine 1-carboxylate + diphosphate. The protein operates within antibiotic biosynthesis; phenazine biosynthesis. With respect to regulation, does not require magnesium or any other divalent metal ions for activity. In terms of biological role, involved in the biosynthesis of prenylated phenazines. Catalyzes the transfer of a dimethylallyl moiety to C-9 of 5,10-dihydrophenazine 1-carboxylate (dihydro-PCA). Specific for both dimethylallyl diphosphate and dihydro-PCA. This chain is 5,10-dihydrophenazine-1-carboxylate 9-dimethylallyltransferase, found in Streptomyces anulatus (Streptomyces chrysomallus).